Here is a 339-residue protein sequence, read N- to C-terminus: Phenylalanine--tRNA ligase alpha subunit (339 aa).

Basic and acidic residues predominate over residues 1–14 (MEAKLKQLEEKAKQ). Residues 1-20 (MEAKLKQLEEKAKQDIQAST) are disordered. A Mg(2+)-binding site is contributed by Glu254.

It belongs to the class-II aminoacyl-tRNA synthetase family. Phe-tRNA synthetase alpha subunit type 1 subfamily. In terms of assembly, tetramer of two alpha and two beta subunits. Requires Mg(2+) as cofactor.

The protein resides in the cytoplasm. It carries out the reaction tRNA(Phe) + L-phenylalanine + ATP = L-phenylalanyl-tRNA(Phe) + AMP + diphosphate + H(+). This Alkaliphilus metalliredigens (strain QYMF) protein is Phenylalanine--tRNA ligase alpha subunit.